A 68-amino-acid chain; its full sequence is DNA-directed RNA polymerase subunit omega (68 aa).

Belongs to the RNA polymerase subunit omega family. In terms of assembly, the RNAP catalytic core consists of 2 alpha, 1 beta, 1 beta' and 1 omega subunit. When a sigma factor is associated with the core the holoenzyme is formed, which can initiate transcription.

It catalyses the reaction RNA(n) + a ribonucleoside 5'-triphosphate = RNA(n+1) + diphosphate. In terms of biological role, promotes RNA polymerase assembly. Latches the N- and C-terminal regions of the beta' subunit thereby facilitating its interaction with the beta and alpha subunits. The sequence is that of DNA-directed RNA polymerase subunit omega from Neisseria meningitidis serogroup C (strain 053442).